Reading from the N-terminus, the 462-residue chain is Probable Xaa-Pro aminopeptidase NECHADRAFT_60613 (462 aa).

Positions 259, 270, 393, and 433 each coordinate Mn(2+).

This sequence belongs to the peptidase M24B family. Mn(2+) is required as a cofactor.

The catalysed reaction is Release of any N-terminal amino acid, including proline, that is linked to proline, even from a dipeptide or tripeptide.. Functionally, catalyzes the removal of a penultimate prolyl residue from the N-termini of peptides. The polypeptide is Probable Xaa-Pro aminopeptidase NECHADRAFT_60613 (Fusarium vanettenii (strain ATCC MYA-4622 / CBS 123669 / FGSC 9596 / NRRL 45880 / 77-13-4) (Fusarium solani subsp. pisi)).